Reading from the N-terminus, the 163-residue chain is Cyclic pyranopterin monophosphate synthase (163 aa).

Residues 74 to 76 (MCH) and 111 to 112 (ME) each bind substrate. D126 is a catalytic residue.

The protein belongs to the MoaC family. Homohexamer; trimer of dimers.

The enzyme catalyses (8S)-3',8-cyclo-7,8-dihydroguanosine 5'-triphosphate = cyclic pyranopterin phosphate + diphosphate. The protein operates within cofactor biosynthesis; molybdopterin biosynthesis. Catalyzes the conversion of (8S)-3',8-cyclo-7,8-dihydroguanosine 5'-triphosphate to cyclic pyranopterin monophosphate (cPMP). The sequence is that of Cyclic pyranopterin monophosphate synthase from Desulfitobacterium hafniense (strain DSM 10664 / DCB-2).